Reading from the N-terminus, the 696-residue chain is MARTTPIERYRNIGISAHIDAGKTTTTERILFYTGKSHKIGEVHDGAATMDWMEQEQERGITITSAATTCFWKGMDGKFPEHRINIIDTPGHVDFTIEVERSMRVLDGACMVYCAVGGVQPQSETVWRQANKYGVPRLAFVNKMDRSGADFFKVYEQMRARLKANPVPIQVPIGAEDKFEGVVDLVKMKAIYWDDASQGMKFDLRDIPANLVDTCKKWREAMLEAAAESSEELMNKYLEEGDLPEADIIAALRARTIASEIVPMMCGTAFKNKGVQAMLDKVIELMPAPTDIPPVKGELENGEAGERQATDEEKFSALAFKVATDPYVGQLIFFRVYSGVVNSGDTIYNPVKGRKERIGRILQMHANQREEIKEVRAGDIAAAVGLKDVTTGDTLCDLNAPITLERMEFPEPVIHVAVEPKTKADQEKMGIALGRLAQEDPSFRVRTDEESGQTIISGMGELHLEILVDRMKREFGVEANVGAPQVAYREAIRKEVEQEGKHAKQSGGKGQYGHVWIKMGPNEAGKGFEFIDAIKGGTVPREFIPAVEKGLREALNNGVLAGFPVVDVKVTLFDGSYHDVDSSELAFKLAAILAFKDGMRKASPVLLEPMMAVEVETPEDYMGDVMGDLNRRRGIIQGMDDAAGIKLVKAEVPLAEMFGYSTDLRSMSQGRATYSMEFKHYSEAPKSVAEAIIAKK.

Positions 8 to 290 (ERYRNIGISA…KVIELMPAPT (283 aa)) constitute a tr-type G domain. Residues 17–24 (AHIDAGKT), 88–92 (DTPGH), and 142–145 (NKMD) contribute to the GTP site.

It belongs to the TRAFAC class translation factor GTPase superfamily. Classic translation factor GTPase family. EF-G/EF-2 subfamily.

The protein localises to the cytoplasm. In terms of biological role, catalyzes the GTP-dependent ribosomal translocation step during translation elongation. During this step, the ribosome changes from the pre-translocational (PRE) to the post-translocational (POST) state as the newly formed A-site-bound peptidyl-tRNA and P-site-bound deacylated tRNA move to the P and E sites, respectively. Catalyzes the coordinated movement of the two tRNA molecules, the mRNA and conformational changes in the ribosome. In Thiobacillus denitrificans (strain ATCC 25259 / T1), this protein is Elongation factor G.